The following is a 458-amino-acid chain: L-hydantoinase (458 aa).

Positions 60, 62, 147, 183, 239, and 312 each coordinate Zn(2+). Residue K147 is modified to N6-carboxylysine.

In terms of assembly, homotetramer. Requires Zn(2+) as cofactor. In terms of processing, carboxylation allows a single lysine to coordinate two zinc ions.

Rather more predominant for the cleavage of aryl- than for alkyl-hydantoin derivatives. The stereoselectivity of this enzyme depends on the substrate used for bioconversion: strictly L-selective for the cleavage of D,L-5-indolylmethylhydantoin, but D-selective for the hydrolysis of D,L-methylthioethylhydantoin. The polypeptide is L-hydantoinase (lhyD) (Paenarthrobacter aurescens (Arthrobacter aurescens)).